A 708-amino-acid polypeptide reads, in one-letter code: Kin of IRRE-like protein 2 (708 aa).

The N-terminal stretch at 1-20 is a signal peptide; sequence MLRMRVPALLVLLFCFRGRA. Residues 21-510 lie on the Extracellular side of the membrane; the sequence is GPSPHFLQQP…GRRDLLPTVR (490 aa). 5 Ig-like C2-type domains span residues 24–118, 123–222, 227–307, 312–394, and 398–501; these read PHFL…AQLH, PEAP…ITLS, PEVT…TALD, PILQ…ARLT, and PPVV…ASLG. Cysteine 45 and cysteine 103 form a disulfide bridge. N-linked (GlcNAc...) asparagine glycosylation is present at asparagine 143. 2 cysteine pairs are disulfide-bonded: cysteine 146/cysteine 204 and cysteine 248/cysteine 291. A Cell attachment site motif is present at residues 149–151; sequence RGD. Asparagine 301 is a glycosylation site (N-linked (GlcNAc...) asparagine). 2 cysteine pairs are disulfide-bonded: cysteine 333-cysteine 375 and cysteine 419-cysteine 485. Asparagine 484 is a glycosylation site (N-linked (GlcNAc...) asparagine). Residues 511-531 form a helical membrane-spanning segment; the sequence is IVAGVAAATTTLLMVITGVAL. At 532–708 the chain is on the cytoplasmic side; sequence CCWRHSKASA…PSHPRLQTHV (177 aa). The disordered stretch occupies residues 545 to 601; it reads EQKNLMRIPGSSDGSSSRGPEEEETGSREDRGPIVHTDHSDLVLEEEGTLETKDPTN. The span at 553 to 562 shows a compositional bias: low complexity; that stretch reads PGSSDGSSSR. Basic and acidic residues predominate over residues 569–586; that stretch reads TGSREDRGPIVHTDHSDL. Serine 571 is modified (phosphoserine). Phosphotyrosine is present on residues tyrosine 603, tyrosine 604, and tyrosine 661. The tract at residues 684–708 is disordered; that stretch reads LAPGTPPFPYAAFPTPSHPRLQTHV.

The protein belongs to the immunoglobulin superfamily. Homodimer. Interacts with NPHS2/podocin (via the C-terminus). Interacts with NPHS1 (via the Ig-like domains). Interacts with FYN. N-glycosylated. Post-translationally, the extracellular domain is cleaved leading to the generation of a soluble fragment and a membrane-bound C-terminal fragment, which is further cleaved by gamma-secretase. As to expression, highly expressed in beta-cells of the pancreatic islets.

It localises to the cell membrane. Functionally, may regulate basal insulin secretion. This Homo sapiens (Human) protein is Kin of IRRE-like protein 2 (KIRREL2).